The primary structure comprises 233 residues: 2-C-methyl-D-erythritol 4-phosphate cytidylyltransferase (233 aa).

This sequence belongs to the IspD/TarI cytidylyltransferase family. IspD subfamily.

The catalysed reaction is 2-C-methyl-D-erythritol 4-phosphate + CTP + H(+) = 4-CDP-2-C-methyl-D-erythritol + diphosphate. The protein operates within isoprenoid biosynthesis; isopentenyl diphosphate biosynthesis via DXP pathway; isopentenyl diphosphate from 1-deoxy-D-xylulose 5-phosphate: step 2/6. Its function is as follows. Catalyzes the formation of 4-diphosphocytidyl-2-C-methyl-D-erythritol from CTP and 2-C-methyl-D-erythritol 4-phosphate (MEP). In Carboxydothermus hydrogenoformans (strain ATCC BAA-161 / DSM 6008 / Z-2901), this protein is 2-C-methyl-D-erythritol 4-phosphate cytidylyltransferase.